A 225-amino-acid chain; its full sequence is Biosynthetic peptidoglycan transglycosylase (225 aa).

The helical transmembrane segment at 8–28 (VLLIFIGAILFIQLWIFSSLV) threads the bilayer.

This sequence belongs to the glycosyltransferase 51 family.

Its subcellular location is the cell inner membrane. The enzyme catalyses [GlcNAc-(1-&gt;4)-Mur2Ac(oyl-L-Ala-gamma-D-Glu-L-Lys-D-Ala-D-Ala)](n)-di-trans,octa-cis-undecaprenyl diphosphate + beta-D-GlcNAc-(1-&gt;4)-Mur2Ac(oyl-L-Ala-gamma-D-Glu-L-Lys-D-Ala-D-Ala)-di-trans,octa-cis-undecaprenyl diphosphate = [GlcNAc-(1-&gt;4)-Mur2Ac(oyl-L-Ala-gamma-D-Glu-L-Lys-D-Ala-D-Ala)](n+1)-di-trans,octa-cis-undecaprenyl diphosphate + di-trans,octa-cis-undecaprenyl diphosphate + H(+). It participates in cell wall biogenesis; peptidoglycan biosynthesis. In terms of biological role, peptidoglycan polymerase that catalyzes glycan chain elongation from lipid-linked precursors. The chain is Biosynthetic peptidoglycan transglycosylase from Acinetobacter baumannii (strain ATCC 17978 / DSM 105126 / CIP 53.77 / LMG 1025 / NCDC KC755 / 5377).